We begin with the raw amino-acid sequence, 355 residues long: Chorismate synthase (355 aa).

R48 contacts NADP(+). Residues 125 to 127 (RSS), 239 to 240 (NA), G280, 295 to 299 (KPVAT), and R321 contribute to the FMN site.

It belongs to the chorismate synthase family. As to quaternary structure, homotetramer. Requires FMNH2 as cofactor.

It carries out the reaction 5-O-(1-carboxyvinyl)-3-phosphoshikimate = chorismate + phosphate. It functions in the pathway metabolic intermediate biosynthesis; chorismate biosynthesis; chorismate from D-erythrose 4-phosphate and phosphoenolpyruvate: step 7/7. In terms of biological role, catalyzes the anti-1,4-elimination of the C-3 phosphate and the C-6 proR hydrogen from 5-enolpyruvylshikimate-3-phosphate (EPSP) to yield chorismate, which is the branch point compound that serves as the starting substrate for the three terminal pathways of aromatic amino acid biosynthesis. This reaction introduces a second double bond into the aromatic ring system. The protein is Chorismate synthase of Flavobacterium psychrophilum (strain ATCC 49511 / DSM 21280 / CIP 103535 / JIP02/86).